Consider the following 230-residue polypeptide: MTQTSFSDPAVMAELLAKMLWEIKAVHFNAAEPYKLASGMRSPVYIDCRKLLSYPRVRSAVMDFAVATLLRNAGFEQFDCIAGGETAGIPFAALLADRLALPMIYVRKQPKGHGRNAQIEGHMPDGARVLVIEDLTTAGGSMFTFIDAVRAAGGVVDHGIALFFYGIFPQAHQRFENGNVKLHYIATWRNVLAVARDQKLFDDKTLSEVESFLDAPLEWSGRNGGVSTLG.

Residues Arg107, Lys108, Lys111, His113, and Glu133–Ser141 each bind 5-phospho-alpha-D-ribose 1-diphosphate. Thr137 contributes to the orotate binding site.

This sequence belongs to the purine/pyrimidine phosphoribosyltransferase family. PyrE subfamily. As to quaternary structure, homodimer. Mg(2+) serves as cofactor.

It carries out the reaction orotidine 5'-phosphate + diphosphate = orotate + 5-phospho-alpha-D-ribose 1-diphosphate. Its pathway is pyrimidine metabolism; UMP biosynthesis via de novo pathway; UMP from orotate: step 1/2. Functionally, catalyzes the transfer of a ribosyl phosphate group from 5-phosphoribose 1-diphosphate to orotate, leading to the formation of orotidine monophosphate (OMP). In Allorhizobium ampelinum (strain ATCC BAA-846 / DSM 112012 / S4) (Agrobacterium vitis (strain S4)), this protein is Orotate phosphoribosyltransferase.